A 429-amino-acid chain; its full sequence is L-cysteine:1D-myo-inositol 2-amino-2-deoxy-alpha-D-glucopyranoside ligase (429 aa).

Cys-60 contacts Zn(2+). Residues 60–63, Thr-75, and 98–100 contribute to the L-cysteinyl-5'-AMP site; these read CGIT and NIT. Residues 62 to 72 carry the 'HIGH' region motif; the sequence is ITPYDATHLGH. Residues 204 to 209 carry the 'ERGGDP' region motif; it reads ERGGDP. Trp-244 contributes to the L-cysteinyl-5'-AMP binding site. Cys-248 serves as a coordination point for Zn(2+). 266–268 is an L-cysteinyl-5'-AMP binding site; it reads GSD. Residue His-273 coordinates Zn(2+). Ile-300 is an L-cysteinyl-5'-AMP binding site. Positions 306–310 match the 'KMSKS' region motif; that stretch reads KMSKS.

The protein belongs to the class-I aminoacyl-tRNA synthetase family. MshC subfamily. In terms of assembly, monomer. Zn(2+) is required as a cofactor.

The catalysed reaction is 1D-myo-inositol 2-amino-2-deoxy-alpha-D-glucopyranoside + L-cysteine + ATP = 1D-myo-inositol 2-(L-cysteinylamino)-2-deoxy-alpha-D-glucopyranoside + AMP + diphosphate + H(+). Catalyzes the ATP-dependent condensation of GlcN-Ins and L-cysteine to form L-Cys-GlcN-Ins. In Mycolicibacterium vanbaalenii (strain DSM 7251 / JCM 13017 / BCRC 16820 / KCTC 9966 / NRRL B-24157 / PYR-1) (Mycobacterium vanbaalenii), this protein is L-cysteine:1D-myo-inositol 2-amino-2-deoxy-alpha-D-glucopyranoside ligase.